A 226-amino-acid polypeptide reads, in one-letter code: Putative N-acetylmannosamine-6-phosphate 2-epimerase (226 aa).

It belongs to the NanE family.

It carries out the reaction an N-acyl-D-glucosamine 6-phosphate = an N-acyl-D-mannosamine 6-phosphate. The protein operates within amino-sugar metabolism; N-acetylneuraminate degradation; D-fructose 6-phosphate from N-acetylneuraminate: step 3/5. In terms of biological role, converts N-acetylmannosamine-6-phosphate (ManNAc-6-P) to N-acetylglucosamine-6-phosphate (GlcNAc-6-P). This chain is Putative N-acetylmannosamine-6-phosphate 2-epimerase, found in Mycoplasma mycoides subsp. mycoides SC (strain CCUG 32753 / NCTC 10114 / PG1).